The primary structure comprises 669 residues: DNA mismatch repair protein MutL (669 aa).

A disordered region spans residues 356–382 (FEQRQNTENNQEKTFSSEESNSKPFME). Residues 361-378 (NTENNQEKTFSSEESNSK) are compositionally biased toward polar residues.

The protein belongs to the DNA mismatch repair MutL/HexB family.

Its function is as follows. This protein is involved in the repair of mismatches in DNA. It is required for dam-dependent methyl-directed DNA mismatch repair. May act as a 'molecular matchmaker', a protein that promotes the formation of a stable complex between two or more DNA-binding proteins in an ATP-dependent manner without itself being part of a final effector complex. The chain is DNA mismatch repair protein MutL from Staphylococcus aureus (strain USA300).